The following is a 349-amino-acid chain: Twinfilin-2 (349 aa).

2 ADF-H domains span residues 4-139 (QTGI…KHVS) and 177-313 (GLAF…DEVH). Residues 324–349 (AKPKGPVGKRGQKRLIKGPGENGEDS) form a disordered region.

Belongs to the actin-binding proteins ADF family. Twinfilin subfamily. In terms of assembly, interacts with G-actin; ADP-actin form and capping protein (CP).

It localises to the cytoplasm. The protein resides in the cytoskeleton. It is found in the perinuclear region. Its function is as follows. Actin-binding protein involved in motile and morphological processes. Inhibits actin polymerization, likely by sequestering G-actin. The chain is Twinfilin-2 (TWF2) from Gallus gallus (Chicken).